Consider the following 95-residue polypeptide: Aspartyl/glutamyl-tRNA(Asn/Gln) amidotransferase subunit C (95 aa).

Belongs to the GatC family. Heterotrimer of A, B and C subunits.

The catalysed reaction is L-glutamyl-tRNA(Gln) + L-glutamine + ATP + H2O = L-glutaminyl-tRNA(Gln) + L-glutamate + ADP + phosphate + H(+). It carries out the reaction L-aspartyl-tRNA(Asn) + L-glutamine + ATP + H2O = L-asparaginyl-tRNA(Asn) + L-glutamate + ADP + phosphate + 2 H(+). In terms of biological role, allows the formation of correctly charged Asn-tRNA(Asn) or Gln-tRNA(Gln) through the transamidation of misacylated Asp-tRNA(Asn) or Glu-tRNA(Gln) in organisms which lack either or both of asparaginyl-tRNA or glutaminyl-tRNA synthetases. The reaction takes place in the presence of glutamine and ATP through an activated phospho-Asp-tRNA(Asn) or phospho-Glu-tRNA(Gln). This is Aspartyl/glutamyl-tRNA(Asn/Gln) amidotransferase subunit C from Chloroherpeton thalassium (strain ATCC 35110 / GB-78).